A 253-amino-acid polypeptide reads, in one-letter code: uncharacterized protein (253 aa).

Substrate is bound at residue S145. The active-site Proton acceptor is the Y159.

The protein belongs to the short-chain dehydrogenases/reductases (SDR) family.

This is an uncharacterized protein from Mycobacterium tuberculosis (strain CDC 1551 / Oshkosh).